The primary structure comprises 112 residues: uncharacterized protein (112 aa).

This is an uncharacterized protein from Escherichia coli.